A 341-amino-acid chain; its full sequence is Anthranilate phosphoribosyltransferase (341 aa).

Residues glycine 79, 82 to 83 (GD), threonine 87, 89 to 92 (NIST), 107 to 115 (KHGNRAASS), and alanine 119 each bind 5-phospho-alpha-D-ribose 1-diphosphate. Glycine 79 contacts anthranilate. Serine 91 contacts Mg(2+). Residue asparagine 110 participates in anthranilate binding. Residue arginine 165 participates in anthranilate binding. Residues aspartate 224 and glutamate 225 each coordinate Mg(2+).

The protein belongs to the anthranilate phosphoribosyltransferase family. Homodimer. The cofactor is Mg(2+).

The catalysed reaction is N-(5-phospho-beta-D-ribosyl)anthranilate + diphosphate = 5-phospho-alpha-D-ribose 1-diphosphate + anthranilate. It functions in the pathway amino-acid biosynthesis; L-tryptophan biosynthesis; L-tryptophan from chorismate: step 2/5. Catalyzes the transfer of the phosphoribosyl group of 5-phosphorylribose-1-pyrophosphate (PRPP) to anthranilate to yield N-(5'-phosphoribosyl)-anthranilate (PRA). The polypeptide is Anthranilate phosphoribosyltransferase (Lacticaseibacillus paracasei (strain ATCC 334 / BCRC 17002 / CCUG 31169 / CIP 107868 / KCTC 3260 / NRRL B-441) (Lactobacillus paracasei)).